Here is a 72-residue protein sequence, read N- to C-terminus: Translational regulator CsrA (72 aa).

This sequence belongs to the CsrA/RsmA family. Homodimer; the beta-strands of each monomer intercalate to form a hydrophobic core, while the alpha-helices form wings that extend away from the core.

The protein localises to the cytoplasm. Functionally, a translational regulator that binds mRNA to regulate translation initiation and/or mRNA stability. Usually binds in the 5'-UTR at or near the Shine-Dalgarno sequence preventing ribosome-binding, thus repressing translation. Its main target seems to be the major flagellin gene, while its function is anatagonized by FliW. This Clostridium botulinum (strain Loch Maree / Type A3) protein is Translational regulator CsrA.